Reading from the N-terminus, the 957-residue chain is Glycine dehydrogenase (decarboxylating) (957 aa).

At lysine 708 the chain carries N6-(pyridoxal phosphate)lysine.

It belongs to the GcvP family. In terms of assembly, the glycine cleavage system is composed of four proteins: P, T, L and H. It depends on pyridoxal 5'-phosphate as a cofactor.

The catalysed reaction is N(6)-[(R)-lipoyl]-L-lysyl-[glycine-cleavage complex H protein] + glycine + H(+) = N(6)-[(R)-S(8)-aminomethyldihydrolipoyl]-L-lysyl-[glycine-cleavage complex H protein] + CO2. Its function is as follows. The glycine cleavage system catalyzes the degradation of glycine. The P protein binds the alpha-amino group of glycine through its pyridoxal phosphate cofactor; CO(2) is released and the remaining methylamine moiety is then transferred to the lipoamide cofactor of the H protein. In Shigella sonnei (strain Ss046), this protein is Glycine dehydrogenase (decarboxylating).